Here is a 206-residue protein sequence, read N- to C-terminus: FMN-dependent NADH:quinone oxidoreductase (206 aa).

FMN contacts are provided by residues S15–S17, M94–F97, and T138–G141.

This sequence belongs to the azoreductase type 1 family. In terms of assembly, homodimer. FMN serves as cofactor.

It catalyses the reaction 2 a quinone + NADH + H(+) = 2 a 1,4-benzosemiquinone + NAD(+). The catalysed reaction is N,N-dimethyl-1,4-phenylenediamine + anthranilate + 2 NAD(+) = 2-(4-dimethylaminophenyl)diazenylbenzoate + 2 NADH + 2 H(+). Functionally, quinone reductase that provides resistance to thiol-specific stress caused by electrophilic quinones. Also exhibits azoreductase activity. Catalyzes the reductive cleavage of the azo bond in aromatic azo compounds to the corresponding amines. This is FMN-dependent NADH:quinone oxidoreductase from Rhizobium meliloti (strain 1021) (Ensifer meliloti).